Reading from the N-terminus, the 390-residue chain is Delta-aminolevulinic acid dehydratase, chloroplastic (390 aa).

A chloroplast-targeting transit peptide spans 1–24 (MQMMQRNVVGQRPVAGSRRSLVVA). Residues 34 to 69 (VSTNGKHRTGVPEGTPIVTPQDLPSRPRRNRRSESF) are disordered. The active-site Schiff-base intermediate with substrate is the Lys-251. Residues Arg-261 and Lys-281 each contribute to the 5-aminolevulinate site. Residue Glu-297 participates in Mg(2+) binding. Lys-312 functions as the Schiff-base intermediate with substrate in the catalytic mechanism. 5-aminolevulinate-binding residues include Ser-338 and Tyr-377.

Belongs to the ALAD family. As to quaternary structure, homooctamer. Requires Mg(2+) as cofactor.

The protein resides in the plastid. The protein localises to the chloroplast. It carries out the reaction 2 5-aminolevulinate = porphobilinogen + 2 H2O + H(+). It participates in porphyrin-containing compound metabolism; protoporphyrin-IX biosynthesis; coproporphyrinogen-III from 5-aminolevulinate: step 1/4. Catalyzes an early step in the biosynthesis of tetrapyrroles. Binds two molecules of 5-aminolevulinate per subunit, each at a distinct site, and catalyzes their condensation to form porphobilinogen. This is Delta-aminolevulinic acid dehydratase, chloroplastic (HEMB) from Chlamydomonas reinhardtii (Chlamydomonas smithii).